Reading from the N-terminus, the 175-residue chain is Protein tyrosine phosphatase PRL-1 (175 aa).

One can recognise a Tyrosine-protein phosphatase domain in the interval Lys-15–Cys-172. Cys-53 and Cys-114 form a disulfide bridge. The active-site Proton donor is the Asp-76. The active-site Phosphocysteine intermediate is Cys-114. A substrate-binding site is contributed by Ala-116–Arg-120. Cys-172 carries the post-translational modification Cysteine methyl ester. Cys-172 is lipidated: S-farnesyl cysteine. The propeptide at Val-173–Met-175 is removed in mature form.

Belongs to the protein-tyrosine phosphatase family.

The protein localises to the cytoplasm. It is found in the mitochondrion matrix. Its subcellular location is the kinetoplast. It localises to the secreted. The protein resides in the extracellular exosome. It catalyses the reaction O-phospho-L-tyrosyl-[protein] + H2O = L-tyrosyl-[protein] + phosphate. With respect to regulation, activated in a reduced environment which promotes the reduction of the disulfide bond between the regulatory Cys-53 and catalytic Cys-114 residues. Has protein tyrosine phosphatase activity and may act as a virulence factor to support intracellular survival in host macrophages. The chain is Protein tyrosine phosphatase PRL-1 from Leishmania major.